We begin with the raw amino-acid sequence, 431 residues long: Enolase (431 aa).

Residue Gln-163 coordinates (2R)-2-phosphoglycerate. Glu-205 serves as the catalytic Proton donor. Residues Asp-242, Glu-283, and Asp-310 each contribute to the Mg(2+) site. (2R)-2-phosphoglycerate is bound by residues Lys-335, Arg-364, Ser-365, and Lys-386. Residue Lys-335 is the Proton acceptor of the active site.

It belongs to the enolase family. The cofactor is Mg(2+).

It localises to the cytoplasm. It is found in the secreted. The protein resides in the cell surface. The catalysed reaction is (2R)-2-phosphoglycerate = phosphoenolpyruvate + H2O. The protein operates within carbohydrate degradation; glycolysis; pyruvate from D-glyceraldehyde 3-phosphate: step 4/5. Functionally, catalyzes the reversible conversion of 2-phosphoglycerate (2-PG) into phosphoenolpyruvate (PEP). It is essential for the degradation of carbohydrates via glycolysis. In Kineococcus radiotolerans (strain ATCC BAA-149 / DSM 14245 / SRS30216), this protein is Enolase.